A 683-amino-acid chain; its full sequence is Dipeptidyl-peptidase 5 (683 aa).

Positions 1-19 are cleaved as a signal peptide; the sequence is MHSLFKQLVFFLVMTLTAA. 6 N-linked (GlcNAc...) asparagine glycosylation sites follow: Asn53, Asn69, Asn103, Asn116, Asn126, and Asn400. Active-site charge relay system residues include Ser535, Asp617, and His649.

Belongs to the peptidase S9C family.

The protein resides in the secreted. It localises to the cytoplasm. It is found in the nucleus. The protein is Dipeptidyl-peptidase 5 of Schizosaccharomyces pombe (strain 972 / ATCC 24843) (Fission yeast).